A 184-amino-acid polypeptide reads, in one-letter code: Photosystem I assembly protein Ycf4 (184 aa).

Helical transmembrane passes span 22-42 (FCWA…GTSS) and 57-77 (IIFF…LFIS).

The protein belongs to the Ycf4 family.

The protein resides in the plastid. Its subcellular location is the chloroplast thylakoid membrane. In terms of biological role, seems to be required for the assembly of the photosystem I complex. This chain is Photosystem I assembly protein Ycf4, found in Lobularia maritima (Sweet alyssum).